The sequence spans 373 residues: G protein-coupled receptor 137Ba (373 aa).

At 1–15 the chain is on the lumenal side; it reads MQKDSLPTLSPAVPP. A helical membrane pass occupies residues 16 to 36; that stretch reads YVMLGLTVAYTIFYCLLFVFV. At 37 to 55 the chain is on the cytoplasmic side; it reads YVQLWLVLRYRHKRFSYQT. The helical transmembrane segment at 56–76 threads the bilayer; it reads VFLFLCLLWAALRALLFSFYF. Over 77-84 the chain is Lumenal; it reads KNCVTANT. A helical transmembrane segment spans residues 85–105; it reads LGPFCFWLLYCFPVCLQFFTL. Topologically, residues 106–135 are cytoplasmic; sequence SLMNLYFAQVIFKAKSKYSPELQKYRLPLY. A helical membrane pass occupies residues 136 to 156; sequence LLFLSISLLFLLVNLTCALLV. The Lumenal segment spans residues 157 to 176; sequence KINRANTETVVLVRVTVNDS. A helical transmembrane segment spans residues 177–197; it reads LFVLCAVSLSLCLYRIAKMSL. At 198-213 the chain is on the cytoplasmic side; sequence ANIYLEAKGTSVCQVT. Residues 214-234 form a helical membrane-spanning segment; that stretch reads LIGVTVVLLYSSRACYNLVVL. Residues 235–268 lie on the Lumenal side of the membrane; it reads ALTKIKSINSFDYDWYNVSDQADLKSTLGDAGYV. The helical transmembrane segment at 269-289 threads the bilayer; sequence VFGVILFVWELLPTSLVVYFF. The Cytoplasmic segment spans residues 290–373; that stretch reads RVRKPTLDRS…HLAPEELNPY (84 aa).

Belongs to the GPR137 family.

The protein resides in the lysosome membrane. Lysosomal integral membrane protein that regulates the localization and activity of mTORC1, a signaling complex promoting cell growth in response to growth factors, energy levels, and amino acids. Interacts with Rag GTPases and increases the lysosomial localization and activity of Rag GTPases and thereby regulates mTORC1 translocation and activity in lysosome. Also acts as a negative regulator of osteoclast activity. May be involved in interleukin-4-induced M2 macrophage polarization. In terms of biological role, also acts as a negative regulator of osteoclast activity. May be involved in interleukin-4-induced M2 macrophage polarization. This is G protein-coupled receptor 137Ba from Danio rerio (Zebrafish).